We begin with the raw amino-acid sequence, 498 residues long: Dynein regulatory complex subunit 2 (498 aa).

Coiled coils occupy residues 98–160, 250–311, and 417–441; these read VIKS…RKTI, KDEK…KAQR, and SLRH…QYLD.

It belongs to the DRC2 family. In terms of assembly, component of the nexin-dynein regulatory complex (N-DRC). Interacts with DRC1.

It localises to the cytoplasm. It is found in the cytoskeleton. The protein localises to the flagellum basal body. The protein resides in the cell projection. Its subcellular location is the cilium. It localises to the flagellum. It is found in the flagellum axoneme. Component of the nexin-dynein regulatory complex (N-DRC), a key regulator of ciliary/flagellar motility which maintains the alignment and integrity of the distal axoneme and regulates microtubule sliding in motile axonemes. Plays a critical role in the assembly of N-DRC and also stabilizes the assembly of multiple inner dynein arms and radial spokes. Coassembles with DRC1 to form a central scaffold needed for assembly of the N-DRC and its attachment to the outer doublet microtubules. The sequence is that of Dynein regulatory complex subunit 2 (CCDC65) from Bos taurus (Bovine).